The chain runs to 284 residues: 2-dehydro-3-deoxyphosphooctonate aldolase (284 aa).

The protein belongs to the KdsA family.

Its subcellular location is the cytoplasm. It catalyses the reaction D-arabinose 5-phosphate + phosphoenolpyruvate + H2O = 3-deoxy-alpha-D-manno-2-octulosonate-8-phosphate + phosphate. Its pathway is carbohydrate biosynthesis; 3-deoxy-D-manno-octulosonate biosynthesis; 3-deoxy-D-manno-octulosonate from D-ribulose 5-phosphate: step 2/3. The protein operates within bacterial outer membrane biogenesis; lipopolysaccharide biosynthesis. This is 2-dehydro-3-deoxyphosphooctonate aldolase from Burkholderia orbicola (strain MC0-3).